The sequence spans 287 residues: ATP synthase gamma chain (287 aa).

It belongs to the ATPase gamma chain family. In terms of assembly, F-type ATPases have 2 components, CF(1) - the catalytic core - and CF(0) - the membrane proton channel. CF(1) has five subunits: alpha(3), beta(3), gamma(1), delta(1), epsilon(1). CF(0) has three main subunits: a, b and c.

The protein resides in the cell inner membrane. Functionally, produces ATP from ADP in the presence of a proton gradient across the membrane. The gamma chain is believed to be important in regulating ATPase activity and the flow of protons through the CF(0) complex. The protein is ATP synthase gamma chain of Xanthomonas campestris pv. campestris (strain B100).